The chain runs to 179 residues: Inner membrane-spanning protein YciB (179 aa).

The next 5 helical transmembrane spans lie at 24 to 44, 49 to 69, 76 to 96, 121 to 141, and 151 to 171; these read TATG…YAME, AMQK…LVLH, WKPT…LWAL, VAWI…AAYF, and LWGY…ISPH.

It belongs to the YciB family.

Its subcellular location is the cell inner membrane. Plays a role in cell envelope biogenesis, maintenance of cell envelope integrity and membrane homeostasis. In Variovorax paradoxus (strain S110), this protein is Inner membrane-spanning protein YciB.